The sequence spans 407 residues: MTTSDPDLSGLETDVCVVGGGATALYGALLCARAGQSVVLVFSQPEFEAAGAGISPLLAPPTLGLLAASGIDEQLTAAGRKVLGVDDHGSTGMLSSWRYADHAGIARPYGLTVPTGTTVQALLAELRAQPRATVLTGEGVVSVEQDDERVVLGFERAAGQDGGVPARRRVAARYAVAADGRQSALRDLVGIRLEVSAFDRPAWLLVAPDVPGRESVLLVRHRAPRALFTIPTPGPSSAVVWAPDRDQEKQLEQGGPAELAEQIKEVDPELSEWLGTVGGRTSPVMRLGFSLWRAPSWRVGRVLLVGESVHGLHTLGGQGLNQSLQGAASAARAIGEALASGDPAAIEDYERVRRPHVERLQDLQWNLQALGYGTAPAVKGAHEDFIDVMTALPPELVAQLDGSDTRA.

As to quaternary structure, does not interact with AsuE2, suggesting a possible transient interaction between the two enzymes instead of formation of a stable complex. Requires FMN as cofactor. FAD serves as cofactor. The cofactor is riboflavin.

The catalysed reaction is protoasukamycin + NADH + O2 + H(+) = 4-hydroxyprotoasukamycin + NAD(+) + H2O. Its pathway is antibiotic biosynthesis. When flavin concentration is low, activity is enhanced by the presence of the NADH-dependent flavin reductase AsuE2. In the presence of abundant flavin, activity of AsuE1 is not affected by AsuE2. Its function is as follows. Involved in the biosynthesis of the antibiotic asukamycin. Catalyzes the conversion of protoasukamycin to 4-hydroxyprotoasukamycin. Can also convert some protoasukamycin derivatives into their corresponding 4-hydroxyprotoasukamycin derivatives. Can also use NADPH, but catalytic efficiency is 50-fold higher with NADH. This is Protoasukamycin 4-monooxygenase from Streptomyces nodosus subsp. asukaensis.